The following is a 596-amino-acid chain: Isocitrate dehydrogenase kinase/phosphatase (596 aa).

ATP-binding positions include 316–322 (APGIRGM) and K337. Residue D372 is part of the active site.

It belongs to the AceK family.

The protein resides in the cytoplasm. The catalysed reaction is L-seryl-[isocitrate dehydrogenase] + ATP = O-phospho-L-seryl-[isocitrate dehydrogenase] + ADP + H(+). Its function is as follows. Bifunctional enzyme which can phosphorylate or dephosphorylate isocitrate dehydrogenase (IDH) on a specific serine residue. This is a regulatory mechanism which enables bacteria to bypass the Krebs cycle via the glyoxylate shunt in response to the source of carbon. When bacteria are grown on glucose, IDH is fully active and unphosphorylated, but when grown on acetate or ethanol, the activity of IDH declines drastically concomitant with its phosphorylation. The polypeptide is Isocitrate dehydrogenase kinase/phosphatase (Cronobacter sakazakii (strain ATCC BAA-894) (Enterobacter sakazakii)).